Reading from the N-terminus, the 510-residue chain is tRNA(Ile)-lysidine synthase (510 aa).

32–37 (SGGLDS) lines the ATP pocket.

The protein belongs to the tRNA(Ile)-lysidine synthase family.

The protein resides in the cytoplasm. It catalyses the reaction cytidine(34) in tRNA(Ile2) + L-lysine + ATP = lysidine(34) in tRNA(Ile2) + AMP + diphosphate + H(+). Ligates lysine onto the cytidine present at position 34 of the AUA codon-specific tRNA(Ile) that contains the anticodon CAU, in an ATP-dependent manner. Cytidine is converted to lysidine, thus changing the amino acid specificity of the tRNA from methionine to isoleucine. This Blochmanniella pennsylvanica (strain BPEN) protein is tRNA(Ile)-lysidine synthase.